Reading from the N-terminus, the 72-residue chain is Translation initiation factor IF-1 (72 aa).

The S1-like domain occupies 1–72; the sequence is MTKEENIEMQ…SKGRIIFRSR (72 aa).

It belongs to the IF-1 family. Component of the 30S ribosomal translation pre-initiation complex which assembles on the 30S ribosome in the order IF-2 and IF-3, IF-1 and N-formylmethionyl-tRNA(fMet); mRNA recruitment can occur at any time during PIC assembly.

It localises to the cytoplasm. One of the essential components for the initiation of protein synthesis. Stabilizes the binding of IF-2 and IF-3 on the 30S subunit to which N-formylmethionyl-tRNA(fMet) subsequently binds. Helps modulate mRNA selection, yielding the 30S pre-initiation complex (PIC). Upon addition of the 50S ribosomal subunit IF-1, IF-2 and IF-3 are released leaving the mature 70S translation initiation complex. The polypeptide is Translation initiation factor IF-1 (Wigglesworthia glossinidia brevipalpis).